Reading from the N-terminus, the 584-residue chain is PE-PGRS family protein PE_PGRS11 (584 aa).

Residues 1–92 (MSFVIVARDA…AATSYAVTEV (92 aa)) form the PE domain. His290 acts as the Tele-phosphohistidine intermediate in catalysis. Glu365 functions as the Proton donor/acceptor in the catalytic mechanism. Residues 384-584 (YLVGPIAWTL…LPIGLPSLIP (201 aa)) form a phosphoglycerate mutase region.

The protein in the N-terminal section; belongs to the mycobacterial PE family. PGRS subfamily. It in the C-terminal section; belongs to the phosphoglycerate mutase family. As to quaternary structure, interacts with human TLR2. The cofactor is Mg(2+).

It localises to the secreted. Its subcellular location is the cell wall. The protein resides in the cell surface. The enzyme catalyses (2R)-2-phosphoglycerate = (2R)-3-phosphoglycerate. Functionally, induces maturation and activation of human dendritic cells (DCs), via TLR2-dependent activation of ERK1/2, p38 MAPK, and NF-kappa-B signaling pathways, and enhances the ability of DCs to stimulate CD4(+) T cells. By activating DCs, could potentially contribute to the initiation of innate immune responses during tuberculosis infection and hence regulate the clinical course of tuberculosis. Involved in resistance to oxidative stress, via TLR2-dependent activation of the PI3K-ERK1/2-NF-kappa-B signaling pathway and expression of COX-2 and Bcl2. Also abolishes H(2)O(2)-triggered activation of p38 MAPK. The protein is PE-PGRS family protein PE_PGRS11 of Mycobacterium tuberculosis (strain ATCC 25618 / H37Rv).